Here is a 446-residue protein sequence, read N- to C-terminus: tRNA modification GTPase MnmE (446 aa).

The (6S)-5-formyl-5,6,7,8-tetrahydrofolate site is built by Arg24, Glu81, and Lys120. The region spanning 216 to 368 (GLHAVLIGPP…LHIRLRELAL (153 aa)) is the TrmE-type G domain. Asn226 contributes to the K(+) binding site. GTP contacts are provided by residues 226–231 (NAGKSS), 245–251 (TDVAGTT), and 270–273 (DTAG). Ser230 contributes to the Mg(2+) binding site. Residues Thr245, Val247, and Thr250 each contribute to the K(+) site. Residue Thr251 coordinates Mg(2+). A (6S)-5-formyl-5,6,7,8-tetrahydrofolate-binding site is contributed by Lys446.

Belongs to the TRAFAC class TrmE-Era-EngA-EngB-Septin-like GTPase superfamily. TrmE GTPase family. As to quaternary structure, homodimer. Heterotetramer of two MnmE and two MnmG subunits. It depends on K(+) as a cofactor.

The protein resides in the cytoplasm. Exhibits a very high intrinsic GTPase hydrolysis rate. Involved in the addition of a carboxymethylaminomethyl (cmnm) group at the wobble position (U34) of certain tRNAs, forming tRNA-cmnm(5)s(2)U34. This chain is tRNA modification GTPase MnmE, found in Xanthomonas oryzae pv. oryzae (strain KACC10331 / KXO85).